The following is a 155-amino-acid chain: 3-dehydroquinate dehydratase (155 aa).

Tyr-22 (proton acceptor) is an active-site residue. Substrate is bound by residues Asn-73, His-79, and Asp-86. The active-site Proton donor is the His-99. Residues 100 to 101 (IS) and Arg-110 each bind substrate.

Belongs to the type-II 3-dehydroquinase family. As to quaternary structure, homododecamer.

The enzyme catalyses 3-dehydroquinate = 3-dehydroshikimate + H2O. The protein operates within metabolic intermediate biosynthesis; chorismate biosynthesis; chorismate from D-erythrose 4-phosphate and phosphoenolpyruvate: step 3/7. Functionally, catalyzes a trans-dehydration via an enolate intermediate. The sequence is that of 3-dehydroquinate dehydratase from Campylobacter hominis (strain ATCC BAA-381 / DSM 21671 / CCUG 45161 / LMG 19568 / NCTC 13146 / CH001A).